Here is a 251-residue protein sequence, read N- to C-terminus: tRNA (guanine-N(7)-)-methyltransferase (251 aa).

A disordered region spans residues methionine 1–valine 29. S-adenosyl-L-methionine contacts are provided by glutamate 84, glutamate 109, aspartate 136, and aspartate 159. Aspartate 159 is a catalytic residue. Lysine 163 contributes to the substrate binding site. The interaction with RNA stretch occupies residues arginine 165 to arginine 170. Residues aspartate 195 and threonine 230–glutamate 233 contribute to the substrate site.

It belongs to the class I-like SAM-binding methyltransferase superfamily. TrmB family.

It catalyses the reaction guanosine(46) in tRNA + S-adenosyl-L-methionine = N(7)-methylguanosine(46) in tRNA + S-adenosyl-L-homocysteine. It participates in tRNA modification; N(7)-methylguanine-tRNA biosynthesis. In terms of biological role, catalyzes the formation of N(7)-methylguanine at position 46 (m7G46) in tRNA. This is tRNA (guanine-N(7)-)-methyltransferase from Acidovorax sp. (strain JS42).